We begin with the raw amino-acid sequence, 244 residues long: Type III pantothenate kinase (244 aa).

11 to 18 (DAGNTSIK) is an ATP binding site. Residues tyrosine 90 and 97–100 (GIDR) contribute to the substrate site. Aspartate 99 (proton acceptor) is an active-site residue. Residue aspartate 119 coordinates K(+). Residue threonine 122 coordinates ATP. Position 175 (threonine 175) interacts with substrate.

The protein belongs to the type III pantothenate kinase family. Homodimer. The cofactor is NH4(+). K(+) serves as cofactor.

It localises to the cytoplasm. It catalyses the reaction (R)-pantothenate + ATP = (R)-4'-phosphopantothenate + ADP + H(+). Its pathway is cofactor biosynthesis; coenzyme A biosynthesis; CoA from (R)-pantothenate: step 1/5. In terms of biological role, catalyzes the phosphorylation of pantothenate (Pan), the first step in CoA biosynthesis. The protein is Type III pantothenate kinase of Marinomonas sp. (strain MWYL1).